A 396-amino-acid chain; its full sequence is Elongation factor Tu 1 (396 aa).

A tr-type G domain is found at 10–206; the sequence is KPHVNVGTIG…QIDSYIPEPE (197 aa). A G1 region spans residues 19–26; it reads GHIDHGKT. 19–26 serves as a coordination point for GTP; the sequence is GHIDHGKT. Threonine 26 is a Mg(2+) binding site. The segment at 60-64 is G2; sequence GITIA. Residues 81–84 are G3; sequence DCPG. Residues 81 to 85 and 136 to 139 contribute to the GTP site; these read DCPGH and NKCD. The segment at 136 to 139 is G4; it reads NKCD. Positions 174-176 are G5; the sequence is SAL.

It belongs to the TRAFAC class translation factor GTPase superfamily. Classic translation factor GTPase family. EF-Tu/EF-1A subfamily. In terms of assembly, monomer.

It is found in the cytoplasm. The catalysed reaction is GTP + H2O = GDP + phosphate + H(+). Its function is as follows. GTP hydrolase that promotes the GTP-dependent binding of aminoacyl-tRNA to the A-site of ribosomes during protein biosynthesis. This Desulfotalea psychrophila (strain LSv54 / DSM 12343) protein is Elongation factor Tu 1.